Reading from the N-terminus, the 406-residue chain is Dematin (406 aa).

Disordered stretches follow at residues 1–30 (MERL…PSSI) and 78–333 (LPRS…DRGN). Residues 11–29 (SPGSVSSSRDSSVPGSPSS) show a composition bias toward low complexity. Phosphoserine is present on residues Ser-16, Ser-18, Ser-26, Ser-92, Ser-96, Ser-105, Ser-110, Ser-113, Ser-157, and Ser-227. Positions 105-114 (SPGTISQASA) are enriched in polar residues. A compositionally biased stretch (acidic residues) spans 217–228 (EEEEEEEDDDSG). The interaction with RASGRF2 stretch occupies residues 225-309 (DDSGEEMKAL…SRLQSTDFSP (85 aa)). 2 stretches are compositionally biased toward basic and acidic residues: residues 229-243 (EEMK…EELS) and 253-262 (ILKEEMEKSL). Phosphoserine is present on residues Ser-270, Ser-280, Ser-290, Ser-304, Ser-316, Ser-334, Ser-373, and Ser-384. Over residues 282 to 323 (HAGTSKSSSLPAYGRTTLSRLQSTDFSPSGSEAESPGLQNGE) the composition is skewed to polar residues. Residues 338 to 406 (VLEQKIYPYE…NELKKKASLF (69 aa)) form the HP domain. Ser-404 is modified (phosphoserine; by PKA).

This sequence belongs to the villin/gelsolin family. In terms of assembly, monomeric; under reducing conditions. Self-associates. Exists under oxidizing condition as a trimer linked by disulfide bonds. Found in a complex with DMTN, F-actin and spectrin. Found in a complex with ADD2, DMTN and SLC2A1. Interacts with F-actin, ITPKB and spectrin. Interacts with SLC2A1 (via C-terminus cytoplasmic region). Interacts with RASGRF2. In terms of processing, phosphorylated. Phosphorylation at Ser-404 by PKA causes the C-terminal headpiece domain to associate with the N-terminal core domain, and leads to the inhibition of its actin bundling activity.

The protein resides in the cytoplasm. It is found in the cytosol. Its subcellular location is the perinuclear region. It localises to the cytoskeleton. The protein localises to the cell membrane. The protein resides in the membrane. It is found in the endomembrane system. Its subcellular location is the cell projection. Membrane-cytoskeleton-associated protein with F-actin-binding activity that induces F-actin bundles formation and stabilization. Its F-actin-bundling activity is reversibly regulated upon its phosphorylation by the cAMP-dependent protein kinase A (PKA). Binds to the erythrocyte membrane glucose transporter-1 SLC2A1/GLUT1, and hence stabilizes and attaches the spectrin-actin network to the erythrocytic plasma membrane. Plays a role in maintaining the functional integrity of PKA-activated erythrocyte shape and the membrane mechanical properties. Also plays a role as a modulator of actin dynamics in fibroblasts; acts as a negative regulator of the RhoA activation pathway. In platelets, functions as a regulator of internal calcium mobilization across the dense tubular system that affects platelet granule secretion pathways and aggregation. Also required for the formation of a diverse set of cell protrusions, such as filopodia and lamellipodia, necessary for platelet cell spreading, motility and migration. Acts as a tumor suppressor and inhibits malignant cell transformation. This Bos taurus (Bovine) protein is Dematin (DMTN).